A 270-amino-acid chain; its full sequence is Tryptophan synthase alpha chain (270 aa).

Catalysis depends on proton acceptor residues Glu-49 and Asp-60.

It belongs to the TrpA family. In terms of assembly, tetramer of two alpha and two beta chains.

The catalysed reaction is (1S,2R)-1-C-(indol-3-yl)glycerol 3-phosphate + L-serine = D-glyceraldehyde 3-phosphate + L-tryptophan + H2O. It participates in amino-acid biosynthesis; L-tryptophan biosynthesis; L-tryptophan from chorismate: step 5/5. Its function is as follows. The alpha subunit is responsible for the aldol cleavage of indoleglycerol phosphate to indole and glyceraldehyde 3-phosphate. In Gluconobacter oxydans (strain 621H) (Gluconobacter suboxydans), this protein is Tryptophan synthase alpha chain.